Consider the following 522-residue polypeptide: uncharacterized protein (522 aa).

The span at 1 to 11 (MSSITSRVSSR) shows a compositional bias: low complexity. The interval 1–20 (MSSITSRVSSRSSHELTEKK) is disordered. A run of 12 helical transmembrane segments spans residues 69–89 (VLWK…MIQY), 116–136 (SMTT…AILM), 141–161 (LSYF…LMAA), 173–193 (FLAG…TAMW), 204–224 (LCWY…SYGL), 236–256 (YVFI…VFIP), 303–323 (VIMI…GVFS), 338–358 (AVLN…SGVL), 367–387 (LLIG…IWKI), 396–416 (LVGV…LSLI), 428–448 (VTSA…PQLF), and 462–482 (AMIV…GYYI).

The protein belongs to the major facilitator superfamily. Allantoate permease family.

The protein resides in the endoplasmic reticulum. Its subcellular location is the membrane. This is an uncharacterized protein from Schizosaccharomyces pombe (strain 972 / ATCC 24843) (Fission yeast).